Reading from the N-terminus, the 1161-residue chain is Nuclear receptor-interacting protein 1 (1161 aa).

An interaction with ZNF366 region spans residues 1–416 (MTHGEELGSD…FESSTPTTID (416 aa)). An LXXLL motif 1 motif is present at residues 21-25 (LEGLL). The interval 34-68 (GTAINKKSAGHKEEDQNFNLSGSAFPSCQSNGPTV) is disordered. Polar residues predominate over residues 50–68 (NFNLSGSAFPSCQSNGPTV). The interval 78–335 (MLHLKKARLL…LNGQARALPA (258 aa)) is repression domain 1. S104 is modified (phosphoserine). An N6-acetyllysine; alternate modification is found at K111. A Glycyl lysine isopeptide (Lys-Gly) (interchain with G-Cter in SUMO2); alternate cross-link involves residue K111. Positions 133–137 (LASLL) match the LXXLL motif 2 motif. K158 carries the N6-acetyllysine modification. K170 is covalently cross-linked (Glycyl lysine isopeptide (Lys-Gly) (interchain with G-Cter in SUMO2)). Residues 185–189 (LKTLL) carry the LXXLL motif 3 motif. Residues K195 and K198 each participate in a glycyl lysine isopeptide (Lys-Gly) (interchain with G-Cter in SUMO2) cross-link. Residue T207 is modified to Phosphothreonine. A Phosphoserine modification is found at S218. Positions 267–271 (LALLL) match the LXXLL motif 4 motif. An N6-acetyllysine mark is found at K287 and K311. S358 is modified (phosphoserine). K374 is covalently cross-linked (Glycyl lysine isopeptide (Lys-Gly) (interchain with G-Cter in SUMO2)). S380 bears the Phosphoserine mark. The short motif at 382–386 (LLHLL) is the LXXLL motif 5 element. Positions 393–436 (TPMNGHSQNERASSFESSTPTTIDEYSDNNPSFTDDSSGDESSY) are disordered. The repression domain 2 stretch occupies residues 411 to 701 (TPTTIDEYSD…PAGPEPGLPG (291 aa)). Residues 432-473 (DESSYSNCVPIDLSCKHRIEKPEAERPVSLENLTQSLLNTWD) are required for targeting to small nuclear foci. The short motif at 441-447 (PIDLSCK) is the CTBP-binding; principal site element. An N6-acetyllysine mark is found at K447 and K482. At S488 the chain carries Phosphoserine. The LXXLL motif 6 signature appears at 501-505 (LLQLL). K509 participates in a covalent cross-link: Glycyl lysine isopeptide (Lys-Gly) (interchain with G-Cter in SUMO2). The segment covering 517-552 (NASPQDIHSDGTKFSPQNYTRTSVIESPSTNRTTPV) has biased composition (polar residues). Residues 517-559 (NASPQDIHSDGTKFSPQNYTRTSVIESPSTNRTTPVSTPPLYT) form a disordered region. Position 519 is a phosphoserine (S519). An N6-acetyllysine modification is found at K529. S531, S543, and S565 each carry phosphoserine. The CTBP-binding signature appears at 566 to 570 (PINLS). Disordered regions lie at residues 604-623 (TKGK…AQNS), 639-702 (GLQS…LPGC), and 717-747 (LLGN…ERAA). K607 is modified (N6-acetyllysine). S672 carries the post-translational modification Phosphoserine. Positions 714–718 (LQLLL) match the LXXLL motif 7 motif. A compositionally biased stretch (basic and acidic residues) spans 724–747 (GKNEKKEKTPARDEAPQEHSERAA). Residues 736-886 (DEAPQEHSER…TAVDTANHHS (151 aa)) are repression domain 3. The interval 754 to 1161 (VKIKSEPCDD…NALTIKKESE (408 aa)) is interaction with ZNF366. Residues K757 and K803 each participate in a glycyl lysine isopeptide (Lys-Gly) (interchain with G-Cter in SUMO2) cross-link. S808 bears the Phosphoserine mark. An LXXLL motif 8 motif is present at residues 820 to 824 (LSRLL). The tract at residues 829 to 848 (ESYPADEQDKSHRNSELPTL) is disordered. Glycyl lysine isopeptide (Lys-Gly) (interchain with G-Cter in SUMO2) cross-links involve residues K851 and K902. N6-acetyllysine; alternate is present on K932. K932 participates in a covalent cross-link: Glycyl lysine isopeptide (Lys-Gly) (interchain with G-Cter in SUMO2); alternate. The short motif at 937-941 (LKQLL) is the LXXLL motif 9 element. Positions 947 to 951 (VRDLS) match the CTBP-binding motif. The span at 950 to 962 (LSPHRSDSVPDTK) shows a compositional bias: basic and acidic residues. A disordered region spans residues 950 to 976 (LSPHRSDSVPDTKKKGHKNNAPGSKPE). S1003 carries the phosphoserine modification. Residues 1063 to 1076 (LTKTNPILYYMLQK) are ligand-dependent nuclear receptor binding. Glycyl lysine isopeptide (Lys-Gly) (interchain with G-Cter in SUMO2) cross-links involve residues K1108, K1118, and K1157. Positions 1121-1161 (FFNLRSPYNSHMGNNASRPHSTNGEVYGLLGNALTIKKESE) are repression domain 4.

As to quaternary structure, interacts with CTBP1, CTBP2, ERS1, HDAC1, HDAC2, HDAC5, HDAC6, NR2C2, NR3C1, NR3C2, YWHAH, JUN and FOS. Found in a complex with both NR3C1 and YWHAH. Interacts with NR2C1 (sumoylated form and via the ligand-binding domain); the interaction results in promoting the repressor activity of NR2C1. Interacts with RARA and RXRB homodimers and RARA/RXRB heterodimers in the presence of ligand. Interacts with HDAC1 and HDAC3 via its N-terminal domain. Interacts with ZNF366. Interacts with RORA. Acetylation abolishes interaction with CTBP1. Phosphorylation enhances interaction with YWHAH. Acetylation regulates its nuclear translocation and corepressive activity. As to expression, expressed in the embryonic placenta. In the adult, expression is strong in the testis and brain. Also expressed at a high level in the white adipose tissue. Expressed constantly but at a weaker level in the adult heart, lung, stomach and kidney. Expressed moderately in the skeletal muscle. Expressed at a low level in the adult spleen, liver and brown adipose tissue. Expressed in the ovary at a high level in granulosa cells and at a lower level in the thecal and interstitial compartments.

Its subcellular location is the nucleus. Functionally, modulates transcriptional repression by nuclear hormone receptors such as NR2C1, thyroid hormone receptor and retinoic acid receptor/RARA. Essential for cumulus expansion and follicle rupture during ovulation. Also controls the balance between fat accumulation and energy expenditure. Positive regulator of the circadian clock gene expression: stimulates transcription of BMAL1, CLOCK and CRY1 by acting as a coactivator for RORA and RORC. Involved in the regulation of ovarian function. Plays a role in renal development. In Mus musculus (Mouse), this protein is Nuclear receptor-interacting protein 1.